The chain runs to 428 residues: Tyrosine--tRNA ligase (428 aa).

Residue Tyr41 participates in L-tyrosine binding. The short motif at 46–55 (PTADSLHLGH) is the 'HIGH' region element. L-tyrosine is bound by residues Tyr179 and Gln183. The short motif at 239–243 (KFGKT) is the 'KMSKS' region element. Lys242 contributes to the ATP binding site. The region spanning 361–418 (TDLMQALVDAELQPSRGQARKTIASNAVTINGEKQSDPEYIFNDEDRLFGRYTLLRRG) is the S4 RNA-binding domain.

This sequence belongs to the class-I aminoacyl-tRNA synthetase family. TyrS type 1 subfamily. As to quaternary structure, homodimer.

Its subcellular location is the cytoplasm. It catalyses the reaction tRNA(Tyr) + L-tyrosine + ATP = L-tyrosyl-tRNA(Tyr) + AMP + diphosphate + H(+). Catalyzes the attachment of tyrosine to tRNA(Tyr) in a two-step reaction: tyrosine is first activated by ATP to form Tyr-AMP and then transferred to the acceptor end of tRNA(Tyr). The polypeptide is Tyrosine--tRNA ligase (Salmonella arizonae (strain ATCC BAA-731 / CDC346-86 / RSK2980)).